The following is a 247-amino-acid chain: MADTTPNGPQGAGAVQFMMTNKLDTAMWLSRLFTVYCSALFVLPLLGLHEAASFYQRALLANALTSALRLHQRLPHFQLSRAFLAQALLEDSCHYLLYSLIFVNSYPVTMSIFPVLLFSLLHAATYTKKVLDARGSNSLPLLRSVLDKLSANQQNILKFIACNEIFLMPATVFMLFSGQGSLLQPFIYYRFLTLRYSSRRNPYCRTLFNELRIVVEHIIMKPACPLFVRRLCLQSIAFISRLAPTVP.

Position 2 is an N-acetylalanine (Ala-2). The Lumenal segment spans residues 2-31 (ADTTPNGPQGAGAVQFMMTNKLDTAMWLSR). Residues 32–52 (LFTVYCSALFVLPLLGLHEAA) traverse the membrane as a helical segment. The Cytoplasmic segment spans residues 53–100 (SFYQRALLANALTSALRLHQRLPHFQLSRAFLAQALLEDSCHYLLYSL). A helical transmembrane segment spans residues 101–121 (IFVNSYPVTMSIFPVLLFSLL). Residues 122-155 (HAATYTKKVLDARGSNSLPLLRSVLDKLSANQQN) are Lumenal-facing. A helical transmembrane segment spans residues 156-176 (ILKFIACNEIFLMPATVFMLF). Residues 177-247 (SGQGSLLQPF…FISRLAPTVP (71 aa)) lie on the Cytoplasmic side of the membrane.

It belongs to the PER33/POM33 family. As to quaternary structure, interacts with EIF2AK3. Interacts with ARL6IP1, isoform RTN1-A of RTN1, isoform RTN2-B of RTN2, isoform 3 of RTN3 and isoform 3 of RTN4. Interacts with RNF5. Interacts with RNF26. Interacts with PKD2. In terms of tissue distribution, prostate cancer and several cancer cell lines (at protein level). Widely expressed. Expressed at higher levels in endocrine-resistant breast cancer cells as compared to endocrine-sensitive breast cancer cells. Expressed at higher levels in early recurrence breast cancer tissues as compared to non-recurrent breast tumors.

It is found in the endoplasmic reticulum membrane. The protein localises to the melanosome. It localises to the nucleus envelope. Acts as a regulator of the tubular endoplasmic reticulum (ER) network by modulating intracellular calcium homeostasis. Mechanistically, stimulates PKD2 calcium-dependent activity. Suppresses the RTN3/4-induced formation of the ER tubules. Positively regulates PERK-mediated and IRE1-mediated unfolded protein response signaling. Plays an essential role in VEGF-mediated release of Ca(2+) from ER stores during angiogenesis. Also plays a role in the modulation of innate immune signaling through the cGAS-STING pathway by interacting with RNF26. Participates in lipid metabolism by acting as a downstream effector of the pyruvate kinase/PKM. Forms a complex with RNF5 to facilitate polyubiquitination and subsequent degradation of SCAP on the ER membrane. This chain is Transmembrane protein 33 (TMEM33), found in Homo sapiens (Human).